The sequence spans 171 residues: Cardioactive peptide (171 aa).

Residues 1 to 26 form the signal peptide; that stretch reads MQMYHVVLGCSLAILLVILDIPQASC. The propeptide occupies 27–49; that stretch reads DDVVIQKRQVDPAEMDRLLDPKR. A disulfide bridge links C54 with C60. C60 is modified (cysteine amide). A propeptide spanning residues 64–171 is cleaved from the precursor; that stretch reads RSDESMGTLV…QEEITKPWSR (108 aa). The disordered stretch occupies residues 116 to 171; it reads QSNQFGAGMDRPLPLPIAGYRRKRFADPESQAPAPHSNLPRATSQLQEEITKPWSR.

As to expression, central nervous system; most neurons exhibit coexpression with burs.

The protein resides in the secreted. Functionally, cardioregulatory neurohormone that increases heart beat rate during adult wing inflation; has no effect on beat amplitude. The effect of CCAP is both ino- and chronotropic. The sequence is that of Cardioactive peptide from Periplaneta americana (American cockroach).